The primary structure comprises 562 residues: MDDNKRPLYLPFAGPAILEAPLINKGSAFTDEERIFFNLEGLLPHVIETIEEQASRAYDQYKNFTNDLDKHIYLRNIQDTNETLYYRLVQNHITEMMPIIYTPTVGMACERFSKDYRRNRGLFISYPNKDRIDDILNNSTRQKVKIIVVTDGERILGLGDQGIGGMGIPIGKLSLYTSCGGISPAYTLPITLDVGTDNPHLLEDPMYMGWRNPRIGGEEYTEFVEAFMQAVHRRWPDALIQFEDFAQKNAMPLLERYKDQYCCFNDDIQGTAAVTVGSLLAACKAAGTQLCQQRITFLGAGSAGCGIAEAIVAQMVSEGIAESQARKQVFMVDRWGMLQSNMPNLLPFQQKLAQDCDDITNWDNFSENISLLDVVNNAKPTILIGVSGAPGLFSEEIIKAMHSHCERPIVFPLSNPTSRVEATPKDILHWTKGQALVATGSPFEPVVVDDITYEIAQCNNSYIFPGIGLGVLAAGAERVSDAMLMASSRALAECSPLSINGEGSLLPQLEDIHKVSKHIAFAVAKVAIEEGHALPTSDELLSQAIEDNFWTAEYRRYKRTSF.

Catalysis depends on Y101, which acts as the Proton donor. Residue R154 participates in NAD(+) binding. K172 serves as the catalytic Proton acceptor. A divalent metal cation-binding residues include E243, D244, and D267. NAD(+)-binding residues include D267 and N415.

The protein belongs to the malic enzymes family. As to quaternary structure, homotetramer. The cofactor is Mg(2+). Requires Mn(2+) as cofactor.

The enzyme catalyses (S)-malate + NAD(+) = pyruvate + CO2 + NADH. The catalysed reaction is oxaloacetate + H(+) = pyruvate + CO2. The sequence is that of NAD-dependent malic enzyme from Shewanella piezotolerans (strain WP3 / JCM 13877).